Here is a 440-residue protein sequence, read N- to C-terminus: Transposon TyH3 Gag polyprotein (440 aa).

Composition is skewed to polar residues over residues 1-23, 48-60, and 127-152; these read MESQ…SVTS, TKAN…TPAS, and QSQF…GNTF. 3 disordered regions span residues 1 to 93, 126 to 173, and 352 to 440; these read MESQ…MMTQ, PQSQ…RPPP, and GSRN…PETY. Residues 153–165 are compositionally biased toward low complexity; that stretch reads TDSSSADSDMTST. Residues 299–401 form an RNA-binding region; sequence NNGIHINNKV…NSKSKTARAH (103 aa). Over residues 402 to 418 the composition is skewed to low complexity; it reads NVSTSNNSPSTDNDSIS. Ser-416 is subject to Phosphoserine. A compositionally biased stretch (polar residues) spans 419 to 428; the sequence is KSTTEPIQLN. Residues 429–440 are compositionally biased toward basic and acidic residues; the sequence is NKHDLHLRPETY.

As to quaternary structure, homotrimer.

It localises to the cytoplasm. Its function is as follows. Capsid protein (CA) is the structural component of the virus-like particle (VLP), forming the shell that encapsulates the retrotransposons dimeric RNA genome. The particles are assembled from trimer-clustered units and there are holes in the capsid shells that allow for the diffusion of macromolecules. CA also has nucleocapsid-like chaperone activity, promoting primer tRNA(i)-Met annealing to the multipartite primer-binding site (PBS), dimerization of Ty1 RNA and initiation of reverse transcription. This is Transposon TyH3 Gag polyprotein (TY1A) from Saccharomyces cerevisiae (Baker's yeast).